The sequence spans 135 residues: MGFHMGRQLLLSGFLLVMLQMVTQTQARPQDVITVAGEETEVVIKREGDDDGDDDDSSSEETVEDSEESRRRRREVNTDNTPSARAVIPGEQVVPILLEAILPSVDAAGDRFARSVQFLKNLTPGSELFAVEKNE.

The first 27 residues, 1–27, serve as a signal peptide directing secretion; that stretch reads MGFHMGRQLLLSGFLLVMLQMVTQTQA. Residues 43–84 are disordered; that stretch reads VIKREGDDDGDDDDSSSEETVEDSEESRRRRREVNTDNTPSA. A compositionally biased stretch (acidic residues) spans 49-67; that stretch reads DDDGDDDDSSSEETVEDSE.

As to expression, antenna. In the third antennal segment. Expressed in sencilla coeloconica.

The sequence is that of Antennal-specific protein OS-C (Os-C) from Drosophila melanogaster (Fruit fly).